Here is a 128-residue protein sequence, read N- to C-terminus: Insulin-like 3 (128 aa).

The N-terminal stretch at 1-15 (MHALLLLLLLALGSA) is a signal peptide. 3 cysteine pairs are disulfide-bonded: Cys29-Cys113, Cys41-Cys126, and Cys112-Cys117. The segment covering 81–94 (ALDPDPALDPQLPH) has biased composition (low complexity). Residues 81–101 (ALDPDPALDPQLPHQASQRQR) form a disordered region.

Belongs to the insulin family. As to quaternary structure, heterodimer of a B chain and an A chain linked by two disulfide bonds. As to expression, expressed in Leydig cells of the testis, and weakly in the theca interna cells of antral follicles and the corpus luteum of the ovary.

It is found in the secreted. In terms of biological role, seems to play a role in testicular function. May be a trophic hormone with a role in testicular descent in fetal life. Is a ligand for LGR8 receptor. The chain is Insulin-like 3 (Insl3) from Rattus norvegicus (Rat).